Reading from the N-terminus, the 299-residue chain is CCR4-NOT transcription complex subunit 9 (299 aa).

Methionine 1 carries the post-translational modification N-acetylmethionine.

It belongs to the CNOT9 family. In terms of assembly, homodimer. Component of the CCR4-NOT complex; distinct complexes seem to exist that differ in the participation of probably mutually exclusive catalytic subunits. Interacts with MYB, ATF2, RARA, RARB, RARG, RXRA, RXRB and RXRG. Identified in a complex with ATF2 bound to target DNA. Interacts with NANOS2. Directly interacts with ZNF335.

Its subcellular location is the nucleus. The protein resides in the cytoplasm. It is found in the P-body. Component of the CCR4-NOT complex which is one of the major cellular mRNA deadenylases and is linked to various cellular processes including bulk mRNA degradation, miRNA-mediated repression, translational repression during translational initiation and general transcription regulation. Additional complex functions may be a consequence of its influence on mRNA expression. Involved in down-regulation of MYB- and JUN-dependent transcription. Enhances ligand-dependent transcriptional activity of nuclear hormone receptors. May play a role in cell differentiation. In Bos taurus (Bovine), this protein is CCR4-NOT transcription complex subunit 9.